A 511-amino-acid polypeptide reads, in one-letter code: Cytochrome P450 4A7 (511 aa).

A propeptide spanning residues 1–4 (MSVS) is cleaved from the precursor. Positions 322 and 458 each coordinate heme.

Belongs to the cytochrome P450 family. It depends on heme as a cofactor. In terms of tissue distribution, liver, kidney, small intestine.

The protein localises to the endoplasmic reticulum membrane. The protein resides in the microsome membrane. It catalyses the reaction an omega-methyl-long-chain fatty acid + reduced [NADPH--hemoprotein reductase] + O2 = an omega-hydroxy-long-chain fatty acid + oxidized [NADPH--hemoprotein reductase] + H2O + H(+). Functionally, cytochromes P450 are a group of heme-thiolate monooxygenases. In liver microsomes, this enzyme is involved in an NADPH-dependent electron transport pathway. It oxidizes a variety of structurally unrelated compounds, including steroids, fatty acids, and xenobiotics. Its function is as follows. The kidney P-450 system is rather specialized for the omega-hydroxylation of fatty acids. Both P450-KA1 and P450-KA2 catalyze the omega- and (omega-1)-hydroxylation of various fatty acids with no drug-metabolizing activity, and hydroxylate prostaglandin A1 and A2 solely at the omega-position. In Oryctolagus cuniculus (Rabbit), this protein is Cytochrome P450 4A7 (CYP4A7).